A 215-amino-acid polypeptide reads, in one-letter code: Adenylate kinase (215 aa).

10-15 contributes to the ATP binding site; sequence GAGKGT. Positions 30–59 are NMP; that stretch reads STGDILRANVREGTELGLAAKEYMDKGELV. Residues Thr-31, Arg-36, 57–59, 85–88, and Gln-92 contribute to the AMP site; these read ELV and GYPR. The interval 126-162 is LID; the sequence is GRLMCNCGASYHRTFNPPKKDDVCDICGGKVFQRADD. Arg-127 is a binding site for ATP. The Zn(2+) site is built by Cys-130 and Cys-132. 135-136 contacts ATP; the sequence is SY. Residues Cys-149 and Cys-152 each contribute to the Zn(2+) site. AMP is bound by residues Arg-159 and Arg-170. Lys-198 is a binding site for ATP.

It belongs to the adenylate kinase family. In terms of assembly, monomer.

The protein resides in the cytoplasm. The enzyme catalyses AMP + ATP = 2 ADP. Its pathway is purine metabolism; AMP biosynthesis via salvage pathway; AMP from ADP: step 1/1. Functionally, catalyzes the reversible transfer of the terminal phosphate group between ATP and AMP. Plays an important role in cellular energy homeostasis and in adenine nucleotide metabolism. This Methanosarcina barkeri (strain Fusaro / DSM 804) protein is Adenylate kinase.